The chain runs to 643 residues: Extracellular metalloproteinase 4 (643 aa).

The signal sequence occupies residues 1 to 18 (MHGLMLAGLLALPLSVLG). The propeptide occupies 19–254 (HPTESHSSGI…VHSVVDYVSA (236 aa)). The span at 47–57 (TKSDAVPKQDG) shows a compositional bias: basic and acidic residues. Residues 47–73 (TKSDAVPKQDGESFTTSSTGNDNSSSG) form a disordered region. Over residues 61–73 (TTSSTGNDNSSSG) the composition is skewed to low complexity. N-linked (GlcNAc...) asparagine glycosylation is found at N271 and N420. H437 is a Zn(2+) binding site. Residue E438 is part of the active site. Residue H441 participates in Zn(2+) binding. N-linked (GlcNAc...) asparagine glycosylation is found at N603 and N629.

The protein belongs to the peptidase M36 family. Zn(2+) serves as cofactor.

It localises to the secreted. In terms of biological role, secreted metalloproteinase probably acting as a virulence factor. The sequence is that of Extracellular metalloproteinase 4 (MEP4) from Trichophyton rubrum (Athlete's foot fungus).